A 34-amino-acid chain; its full sequence is uncharacterized protein (34 aa).

Residues 10 to 30 (LIITSSFFAIAVVLVLSVLLI) traverse the membrane as a helical segment.

It localises to the membrane. This is an uncharacterized protein from Escherichia coli O157:H7.